Reading from the N-terminus, the 465-residue chain is MQPKYDYDAIIIGSGPGGEGAAMGLTKRGARVAIIERYDNVGGGCTHWGTIPSKALRQAVSRIIEINQSPLHGNTRLPHTGFSDILCHADQVINQQTHMRQGFYERNHCQIFTGEASFVDEHQVQIHYGDNTTETLSAENIVIACGSRPYQPQDVDFDHPRIYDSDSILDLKHDPHHVIIYGAGVIGCEYASIFRGMNVKVDLINTRDRLLAFLDQEMSDALSYHFWENGVVIRHNEEYEEIKGLDDGVEVRFRSGKRMKADCLLYANGRTGNTDTLKLDKVELEADSRGLIKVNSMYQTAARHIYAVGDVIGYPSLASAAYDQGRIAAQVIIKGQANVQLIENIPTGIYTIPEISSVGKTEQELTAMKVPYEVGRAQFKHLARAQIVGMNVGSLKLLFHRETKQILGIHCFGERAAEIIHIGQAIMEQKGEGNTIEYFVNTTFNYPTMAEAYRVAALNGLNRLF.

Residue 36–45 coordinates FAD; the sequence is ERYDNVGGGC.

The protein belongs to the class-I pyridine nucleotide-disulfide oxidoreductase family. It depends on FAD as a cofactor.

Its subcellular location is the cytoplasm. The catalysed reaction is NAD(+) + NADPH = NADH + NADP(+). Its function is as follows. Conversion of NADPH, generated by peripheral catabolic pathways, to NADH, which can enter the respiratory chain for energy generation. In Sodalis glossinidius (strain morsitans), this protein is Soluble pyridine nucleotide transhydrogenase.